The primary structure comprises 99 residues: Large ribosomal subunit protein uL23 (99 aa).

Belongs to the universal ribosomal protein uL23 family. In terms of assembly, part of the 50S ribosomal subunit. Contacts protein L29, and trigger factor when it is bound to the ribosome.

In terms of biological role, one of the early assembly proteins it binds 23S rRNA. One of the proteins that surrounds the polypeptide exit tunnel on the outside of the ribosome. Forms the main docking site for trigger factor binding to the ribosome. This chain is Large ribosomal subunit protein uL23, found in Pseudomonas aeruginosa (strain LESB58).